A 942-amino-acid polypeptide reads, in one-letter code: Netrin receptor UNC5B-b (942 aa).

The signal sequence occupies residues 1–30 (MYLSRIPGGAALAALLVALLLCCNFPPSIA). The Extracellular portion of the chain corresponds to 31–380 (GIEYSDVLPD…LESTGDVALY (350 aa)). An Ig-like domain is found at 51 to 148 (PHFLLEPEDA…AGTTKSKRSY (98 aa)). Cystine bridges form between Cys72/Cys133, Cys84/Cys131, Cys177/Cys228, Cys261/Cys298, Cys265/Cys302, Cys276/Cys288, Cys317/Cys351, Cys321/Cys356, and Cys329/Cys341. The Ig-like C2-type domain maps to 150-245 (RIAYLRKNFD…KRRSTTATVI (96 aa)). Asn225 carries an N-linked (GlcNAc...) asparagine glycan. 2 consecutive TSP type-1 domains span residues 249 to 303 (NGGW…TMCP) and 305 to 357 (DGGW…GLCM). Asn350 carries an N-linked (GlcNAc...) asparagine glycan. Residues 381–401 (AGLVVAIFIIIILLMAVGIVV) traverse the membrane as a helical segment. The Cytoplasmic portion of the chain corresponds to 402-942 (YRRNCREFDT…MLVMATDGDC (541 aa)). The region spanning 541–684 (NSVTGTFGSL…LGTYAFVGES (144 aa)) is the ZU5 domain. Positions 687–835 (RSAIKRLQLA…LEENVKSFDP (149 aa)) are UPA domain. Positions 863-940 (ICNSLDAPNS…EMMLVMATDG (78 aa)) constitute a Death domain.

Belongs to the unc-5 family. Interacts (via extracellular domain) with flrt3 (via extracellular domain). Interacts with rnd1.

The protein resides in the cell membrane. Functionally, plays a role in cell-cell adhesion during embryonic development. Receptor for netrin required for axon guidance. Mediates axon repulsion of neuronal growth cones in the developing nervous system upon ligand binding. This is Netrin receptor UNC5B-b from Xenopus laevis (African clawed frog).